The chain runs to 370 residues: Anthranilate phosphoribosyltransferase (370 aa).

5-phospho-alpha-D-ribose 1-diphosphate-binding positions include glycine 82, 85 to 86 (GD), threonine 90, 92 to 95 (NVST), 110 to 118 (KHGNRAATS), and serine 122. Residue glycine 82 coordinates anthranilate. Residue serine 94 coordinates Mg(2+). Residue asparagine 113 participates in anthranilate binding. Arginine 168 serves as a coordination point for anthranilate. Residues aspartate 226 and glutamate 227 each contribute to the Mg(2+) site.

This sequence belongs to the anthranilate phosphoribosyltransferase family. As to quaternary structure, homodimer. The cofactor is Mg(2+).

The catalysed reaction is N-(5-phospho-beta-D-ribosyl)anthranilate + diphosphate = 5-phospho-alpha-D-ribose 1-diphosphate + anthranilate. It functions in the pathway amino-acid biosynthesis; L-tryptophan biosynthesis; L-tryptophan from chorismate: step 2/5. Its function is as follows. Catalyzes the transfer of the phosphoribosyl group of 5-phosphorylribose-1-pyrophosphate (PRPP) to anthranilate to yield N-(5'-phosphoribosyl)-anthranilate (PRA). The chain is Anthranilate phosphoribosyltransferase from Methanosarcina acetivorans (strain ATCC 35395 / DSM 2834 / JCM 12185 / C2A).